Consider the following 205-residue polypeptide: S-crystallin SL11 (205 aa).

Positions 2-80 (PSYTLYYFNG…YLAREFGFYG (79 aa)) constitute a GST N-terminal domain. Residues 82–205 (NNMDMFKVDC…YIKKRNNTAF (124 aa)) form the GST C-terminal domain.

It belongs to the GST superfamily. In terms of tissue distribution, lens.

In terms of biological role, S-crystallins are structural components of squids and octopi eye lens. Contains relatively little if any GST activity. The sequence is that of S-crystallin SL11 from Nototodarus sloanii (Wellington flying squid).